Reading from the N-terminus, the 681-residue chain is Potassium-transporting ATPase ATP-binding subunit (681 aa).

4 consecutive transmembrane segments (helical) span residues 30–50 (LLVY…FFGI), 59–79 (LAIA…EAIA), 216–236 (ILLV…LPFT), and 255–275 (IALL…SIGI). Catalysis depends on aspartate 306, which acts as the 4-aspartylphosphate intermediate. ATP contacts are provided by residues aspartate 343, glutamate 347, 376 to 383 (FTATTRMS), and lysine 394. Residues aspartate 517 and aspartate 521 each coordinate Mg(2+). The next 3 membrane-spanning stretches (helical) occupy residues 587–607 (FAII…LNLM), 615–635 (AILS…PLSL), and 661–681 (LIAP…LGIV).

It belongs to the cation transport ATPase (P-type) (TC 3.A.3) family. Type IA subfamily. As to quaternary structure, the system is composed of three essential subunits: KdpA, KdpB and KdpC.

The protein localises to the cell membrane. The catalysed reaction is K(+)(out) + ATP + H2O = K(+)(in) + ADP + phosphate + H(+). Its function is as follows. Part of the high-affinity ATP-driven potassium transport (or Kdp) system, which catalyzes the hydrolysis of ATP coupled with the electrogenic transport of potassium into the cytoplasm. This subunit is responsible for energy coupling to the transport system and for the release of the potassium ions to the cytoplasm. The polypeptide is Potassium-transporting ATPase ATP-binding subunit (Listeria monocytogenes serotype 4a (strain HCC23)).